Consider the following 231-residue polypeptide: Large ribosomal subunit protein uL1 (231 aa).

The protein belongs to the universal ribosomal protein uL1 family. As to quaternary structure, part of the 50S ribosomal subunit.

Functionally, binds directly to 23S rRNA. The L1 stalk is quite mobile in the ribosome, and is involved in E site tRNA release. Protein L1 is also a translational repressor protein, it controls the translation of the L11 operon by binding to its mRNA. The polypeptide is Large ribosomal subunit protein uL1 (Neisseria gonorrhoeae (strain ATCC 700825 / FA 1090)).